Consider the following 168-residue polypeptide: Ubiquitin-fold modifier-conjugating enzyme 1 (168 aa).

C116 functions as the Glycyl thioester intermediate in the catalytic mechanism.

It belongs to the ubiquitin-conjugating enzyme family. UFC1 subfamily.

Its function is as follows. E2-like enzyme which forms an intermediate with UFM1 via a thioester linkage. The polypeptide is Ubiquitin-fold modifier-conjugating enzyme 1 (Trichoplax adhaerens (Trichoplax reptans)).